A 728-amino-acid chain; its full sequence is Catalase-peroxidase 1 (728 aa).

Residues 1-22 form the signal peptide; the sequence is MDKTQSSQGKCPVMHGANSAVA. The segment at residues 97–225 is a cross-link (tryptophyl-tyrosyl-methioninium (Trp-Tyr) (with M-251)); that stretch reads WHSAGTYRVA…LAAVMMGLIY (129 aa). Histidine 98 acts as the Proton acceptor in catalysis. The segment at residues 225 to 251 is a cross-link (tryptophyl-tyrosyl-methioninium (Tyr-Met) (with W-97)); the sequence is YVNPEGVDGKPDPLRTAQDVRVTFARM. A heme b-binding site is contributed by histidine 266.

This sequence belongs to the peroxidase family. Peroxidase/catalase subfamily. In terms of assembly, homodimer or homotetramer. Requires heme b as cofactor. In terms of processing, formation of the three residue Trp-Tyr-Met cross-link is important for the catalase, but not the peroxidase activity of the enzyme.

It carries out the reaction H2O2 + AH2 = A + 2 H2O. The enzyme catalyses 2 H2O2 = O2 + 2 H2O. Functionally, bifunctional enzyme with both catalase and broad-spectrum peroxidase activity. The polypeptide is Catalase-peroxidase 1 (Shewanella sp. (strain ANA-3)).